The chain runs to 602 residues: Type 2 DNA topoisomerase 6 subunit B (602 aa).

ATP contacts are provided by residues asparagine 40, aspartate 71, 92–93 (SR), 102–109 (GQQGIGIS), and lysine 425.

It belongs to the TOP6B family. In terms of assembly, homodimer. Heterotetramer of two Top6A and two Top6B chains.

The catalysed reaction is ATP-dependent breakage, passage and rejoining of double-stranded DNA.. Its function is as follows. Relaxes both positive and negative superturns and exhibits a strong decatenase activity. This is Type 2 DNA topoisomerase 6 subunit B from Archaeoglobus fulgidus (strain ATCC 49558 / DSM 4304 / JCM 9628 / NBRC 100126 / VC-16).